Consider the following 210-residue polypeptide: FMN-dependent NADH:quinone oxidoreductase (210 aa).

Residues 17-19, 102-105, and 148-151 contribute to the FMN site; these read SRS, MWNL, and SCGG.

This sequence belongs to the azoreductase type 1 family. Homodimer. Requires FMN as cofactor.

It carries out the reaction 2 a quinone + NADH + H(+) = 2 a 1,4-benzosemiquinone + NAD(+). It catalyses the reaction N,N-dimethyl-1,4-phenylenediamine + anthranilate + 2 NAD(+) = 2-(4-dimethylaminophenyl)diazenylbenzoate + 2 NADH + 2 H(+). Functionally, quinone reductase that provides resistance to thiol-specific stress caused by electrophilic quinones. In terms of biological role, also exhibits azoreductase activity. Catalyzes the reductive cleavage of the azo bond in aromatic azo compounds to the corresponding amines. The protein is FMN-dependent NADH:quinone oxidoreductase of Trichlorobacter lovleyi (strain ATCC BAA-1151 / DSM 17278 / SZ) (Geobacter lovleyi).